The following is a 621-amino-acid chain: tRNA uridine 5-carboxymethylaminomethyl modification enzyme MnmG (621 aa).

9–14 lines the FAD pocket; it reads GGGHAG. Residue 270–284 coordinates NAD(+); sequence GPRYCPSIEDKIVKF.

This sequence belongs to the MnmG family. As to quaternary structure, homodimer. Heterotetramer of two MnmE and two MnmG subunits. FAD serves as cofactor.

It localises to the cytoplasm. In terms of biological role, NAD-binding protein involved in the addition of a carboxymethylaminomethyl (cmnm) group at the wobble position (U34) of certain tRNAs, forming tRNA-cmnm(5)s(2)U34. This chain is tRNA uridine 5-carboxymethylaminomethyl modification enzyme MnmG, found in Borreliella burgdorferi (strain ATCC 35210 / DSM 4680 / CIP 102532 / B31) (Borrelia burgdorferi).